Reading from the N-terminus, the 215-residue chain is Octanoyltransferase (215 aa).

Positions 31–206 constitute a BPL/LPL catalytic domain; that stretch reads PDSQDEIWLV…QLVKHLDYAE (176 aa). Residues 70–77, 137–139, and 150–152 contribute to the substrate site; these read RGGQVTYH, SLG, and GLA. Cys-168 serves as the catalytic Acyl-thioester intermediate.

It belongs to the LipB family.

Its subcellular location is the cytoplasm. It carries out the reaction octanoyl-[ACP] + L-lysyl-[protein] = N(6)-octanoyl-L-lysyl-[protein] + holo-[ACP] + H(+). Its pathway is protein modification; protein lipoylation via endogenous pathway; protein N(6)-(lipoyl)lysine from octanoyl-[acyl-carrier-protein]: step 1/2. In terms of biological role, catalyzes the transfer of endogenously produced octanoic acid from octanoyl-acyl-carrier-protein onto the lipoyl domains of lipoate-dependent enzymes. Lipoyl-ACP can also act as a substrate although octanoyl-ACP is likely to be the physiological substrate. This chain is Octanoyltransferase, found in Pseudomonas putida (strain W619).